Reading from the N-terminus, the 355-residue chain is Peptide chain release factor 1 (355 aa).

Residue Gln233 is modified to N5-methylglutamine.

The protein belongs to the prokaryotic/mitochondrial release factor family. In terms of processing, methylated by PrmC. Methylation increases the termination efficiency of RF1.

Its subcellular location is the cytoplasm. Functionally, peptide chain release factor 1 directs the termination of translation in response to the peptide chain termination codons UAG and UAA. In Clostridium tetani (strain Massachusetts / E88), this protein is Peptide chain release factor 1.